Here is a 77-residue protein sequence, read N- to C-terminus: Putative antitoxin VapB3 (77 aa).

A coiled-coil region spans residues Arg-10 to Ala-60.

In terms of assembly, forms a complex with putative toxin VapC3, possibly VapB(2)-VapC(2).

Its function is as follows. Antitoxin component of a type II toxin-antitoxin (TA) system. The polypeptide is Putative antitoxin VapB3 (vAPb3) (Pyrobaculum aerophilum (strain ATCC 51768 / DSM 7523 / JCM 9630 / CIP 104966 / NBRC 100827 / IM2)).